A 478-amino-acid polypeptide reads, in one-letter code: Deoxyribodipyrimidine photo-lyase (478 aa).

Residues 2-136 form the Photolyase/cryptochrome alpha/beta domain; sequence NVNLMWFRND…IINCFHDSVL (135 aa). Glu-110 is a (6R)-5,10-methylene-5,6,7,8-tetrahydrofolate binding site. FAD-binding positions include Tyr-227 and 239–243; that span reads TSMLS. Interaction with DNA regions lie at residues 279 to 286 and 346 to 347; these read ELLWREFY and NR. Residue 377–379 coordinates FAD; sequence DGD. Gln-409 contributes to the DNA binding site.

It belongs to the DNA photolyase class-1 family. Monomer. The cofactor is FAD. (6R)-5,10-methylene-5,6,7,8-tetrahydrofolate serves as cofactor.

It carries out the reaction cyclobutadipyrimidine (in DNA) = 2 pyrimidine residues (in DNA).. Functionally, involved in repair of UV radiation-induced DNA damage. Catalyzes the light-dependent monomerization (300-600 nm) of cyclobutyl pyrimidine dimers (in cis-syn configuration), which are formed between adjacent bases on the same DNA strand upon exposure to ultraviolet radiation. This is Deoxyribodipyrimidine photo-lyase (phrB) from Buchnera aphidicola subsp. Baizongia pistaciae (strain Bp).